Reading from the N-terminus, the 283-residue chain is Pantothenate synthetase (283 aa).

34 to 41 contacts ATP; the sequence is MGALHDGH. Histidine 41 acts as the Proton donor in catalysis. Glutamine 65 serves as a coordination point for (R)-pantoate. Residue glutamine 65 participates in beta-alanine binding. 152 to 155 contributes to the ATP binding site; it reads GSKD. (R)-pantoate is bound at residue glutamine 158. Residues isoleucine 181 and 189–192 each bind ATP; that span reads MSSR.

The protein belongs to the pantothenate synthetase family. In terms of assembly, homodimer.

The protein resides in the cytoplasm. It catalyses the reaction (R)-pantoate + beta-alanine + ATP = (R)-pantothenate + AMP + diphosphate + H(+). It functions in the pathway cofactor biosynthesis; (R)-pantothenate biosynthesis; (R)-pantothenate from (R)-pantoate and beta-alanine: step 1/1. Functionally, catalyzes the condensation of pantoate with beta-alanine in an ATP-dependent reaction via a pantoyl-adenylate intermediate. This chain is Pantothenate synthetase, found in Rhodopseudomonas palustris (strain HaA2).